Reading from the N-terminus, the 945-residue chain is Nonsense-mediated mRNA decay factor SMG8 (945 aa).

Disordered regions lie at residues 563–604 (RAEP…SANE) and 633–671 (AEAE…ERSA).

Belongs to the SMG8 family.

Functionally, involved in nonsense-mediated decay (NMD) of mRNAs containing premature stop codons. Probable component of kinase complex containing nonC and recruited to stalled ribosomes. The sequence is that of Nonsense-mediated mRNA decay factor SMG8 from Drosophila grimshawi (Hawaiian fruit fly).